A 222-amino-acid chain; its full sequence is Small ribosomal subunit protein uS7m (222 aa).

A mitochondrion-targeting transit peptide spans 1–14; it reads MSKKLANFAQKRWI.

Belongs to the universal ribosomal protein uS7 family. Component of the mitochondrial ribosome small subunit (28S) which comprises a 12S rRNA and about 30 distinct proteins.

It is found in the mitochondrion. This is Small ribosomal subunit protein uS7m (mrps-7) from Caenorhabditis briggsae.